The chain runs to 293 residues: Cytidine deaminase (293 aa).

2 consecutive CMP/dCMP-type deaminase domains span residues 47–166 and 186–293; these read DDRA…FGPA and VSDD…YQAV. Substrate is bound at residue 88 to 90; it reads NME. Residue His-101 participates in Zn(2+) binding. The active-site Proton donor is the Glu-103. Zn(2+)-binding residues include Cys-128 and Cys-131.

The protein belongs to the cytidine and deoxycytidylate deaminase family. As to quaternary structure, homodimer. The cofactor is Zn(2+).

The catalysed reaction is cytidine + H2O + H(+) = uridine + NH4(+). It carries out the reaction 2'-deoxycytidine + H2O + H(+) = 2'-deoxyuridine + NH4(+). Functionally, this enzyme scavenges exogenous and endogenous cytidine and 2'-deoxycytidine for UMP synthesis. This chain is Cytidine deaminase, found in Aeromonas hydrophila subsp. hydrophila (strain ATCC 7966 / DSM 30187 / BCRC 13018 / CCUG 14551 / JCM 1027 / KCTC 2358 / NCIMB 9240 / NCTC 8049).